A 220-amino-acid polypeptide reads, in one-letter code: Charged multivesicular body protein 3 (220 aa).

A lipid anchor (N-myristoyl glycine) is attached at Gly-2. Residues 22 to 54 (KIRKEMRVIDRQIRDIQREQEKVKRSIKESAKK) are a coiled coil. The important for autoinhibitory function stretch occupies residues 168–169 (IL). Residues 196 to 220 (AMAASDEEEEEDLEAMQSRLAALRS) form a disordered region. The stretch at 197-220 (MAASDEEEEEDLEAMQSRLAALRS) forms a coiled coil. Positions 200-209 (SDEEEEEDLE) are enriched in acidic residues. The short motif at 201 to 209 (DEEEEEDLE) is the MIT-interacting motif element. Interaction with STAMBP regions lie at residues 203–207 (EEEED) and 219–220 (RS).

This sequence belongs to the SNF7 family. Probable core component of the endosomal sorting required for transport complex III (ESCRT-III). ESCRT-III components are thought to multimerize to form a flat lattice on the perimeter membrane of the endosome. Several assembly forms of ESCRT-III may exist that interact and act sequentially.

It localises to the cytoplasm. Its subcellular location is the cytosol. It is found in the membrane. The protein resides in the endosome. The protein localises to the late endosome membrane. Functionally, probable core component of the endosomal sorting required for transport complex III (ESCRT-III) which is involved in multivesicular bodies (MVBs) formation and sorting of endosomal cargo proteins into MVBs. MVBs contain intraluminal vesicles (ILVs) that are generated by invagination and scission from the limiting membrane of the endosome and mostly are delivered to lysosomes enabling degradation of membrane proteins, such as stimulated growth factor receptors, lysosomal enzymes and lipids. Involved in late stages of cytokinesis. Plays a role in endosomal sorting/trafficking of EGF receptor. The chain is Charged multivesicular body protein 3 (chmp3) from Xenopus tropicalis (Western clawed frog).